The chain runs to 300 residues: Ribonuclease HIII (300 aa).

An RNase H type-2 domain is found at 86 to 300 (RSRIGVDESG…FNEVLGSGNQ (215 aa)). A divalent metal cation is bound by residues Asp92, Glu93, and Asp196.

It belongs to the RNase HII family. RnhC subfamily. Mn(2+) is required as a cofactor. Requires Mg(2+) as cofactor.

Its subcellular location is the cytoplasm. It carries out the reaction Endonucleolytic cleavage to 5'-phosphomonoester.. Functionally, endonuclease that specifically degrades the RNA of RNA-DNA hybrids. The polypeptide is Ribonuclease HIII (Chlamydia trachomatis serovar A (strain ATCC VR-571B / DSM 19440 / HAR-13)).